The following is a 429-amino-acid chain: Protein ABERRANT PANICLE ORGANIZATION 1 (429 aa).

Pro residues predominate over residues 1–11 (MMNPRRLPPLP). Residues 1–21 (MMNPRRLPPLPSSTSSASAAD) form a disordered region. One can recognise an F-box domain in the interval 25 to 71 (PRVWRRLPQPLVDRILACLPTPSFLRLRAACRRFYHLLFSSPFLHSH). A run of 2 helical transmembrane segments spans residues 72–92 (LLLSPHLPFFAFVVPAAGHLL) and 112–132 (VAGGPAAFSPAAASAGLLAFL). 3 Kelch repeats span residues 229 to 277 (MAFA…ELGG), 284 to 339 (RVAL…AEGG), and 350 to 397 (YVVL…GAAG).

In terms of assembly, part of a putative SCF (ASK/Cullin/F-box) ubiquitin ligase complex. Interacts with FL/APO2. Expressed in apical meristems and the lateral organ primordia throughout development. Expressed in seedlings, roots, leaves, shoot apical meristem (SAM), developing panicles, and, at lower levels, in developing seeds.

The protein resides in the membrane. Its pathway is protein modification; protein ubiquitination. Its function is as follows. Component of SCF(ASK-cullin-F-box) E3 ubiquitin ligase complexes, which may mediate the ubiquitination and subsequent proteasomal degradation of target proteins. Together with FL/APO2, involved in the temporal regulation of meristem identity during both vegetative and reproductive developments in an APO2-dependent manner. Promotes spikelet formation by suppressing the precocious conversion of inflorescence meristems to spikelet meristems, probably via a positive regulation of class-C floral homeotic genes, but not of class-B genes, and through the control of cell proliferation in meristems. Mediates culm development and strength/diameter enhancement at internodes. Required for the regulation of the plastochron, floral organ identity, and floral determinacy. Controls the number of primary rachis branches (PRBs). May trigger the formation of vascular bundle systems which, consequently, promote carbohydrate translocation to panicles. Involved in ozone-induced grain yield regulation. The sequence is that of Protein ABERRANT PANICLE ORGANIZATION 1 from Oryza sativa subsp. japonica (Rice).